The sequence spans 155 residues: UPF0178 protein RPC_3085 (155 aa).

The protein belongs to the UPF0178 family.

This Rhodopseudomonas palustris (strain BisB18) protein is UPF0178 protein RPC_3085.